A 64-amino-acid polypeptide reads, in one-letter code: Large ribosomal subunit protein bL35 (64 aa).

The protein belongs to the bacterial ribosomal protein bL35 family.

This Alcanivorax borkumensis (strain ATCC 700651 / DSM 11573 / NCIMB 13689 / SK2) protein is Large ribosomal subunit protein bL35.